Here is a 31-residue protein sequence, read N- to C-terminus: U6-ctenitoxin-Co1a (31 aa).

Disulfide bonds link cysteine 2-cysteine 18 and cysteine 9-cysteine 23.

As to expression, expressed by the venom gland.

The protein localises to the secreted. Functionally, antagonist of L-type calcium channels (Cav1/CACNA1). In Ctenus ornatus (Brazilian spider), this protein is U6-ctenitoxin-Co1a.